Consider the following 140-residue polypeptide: Small ribosomal subunit protein uS12 (140 aa).

The tract at residues 1–20 (MPTINQLVRKGRQSKVVKSD) is disordered. D102 is subject to 3-methylthioaspartic acid. The disordered stretch occupies residues 121 to 140 (DGRMQGRSKYGTKRPKAAKK). Basic residues predominate over residues 130–140 (YGTKRPKAAKK).

It belongs to the universal ribosomal protein uS12 family. In terms of assembly, part of the 30S ribosomal subunit. Contacts proteins S8 and S17. May interact with IF1 in the 30S initiation complex.

Functionally, with S4 and S5 plays an important role in translational accuracy. Its function is as follows. Interacts with and stabilizes bases of the 16S rRNA that are involved in tRNA selection in the A site and with the mRNA backbone. Located at the interface of the 30S and 50S subunits, it traverses the body of the 30S subunit contacting proteins on the other side and probably holding the rRNA structure together. The combined cluster of proteins S8, S12 and S17 appears to hold together the shoulder and platform of the 30S subunit. The sequence is that of Small ribosomal subunit protein uS12 from Exiguobacterium sibiricum (strain DSM 17290 / CCUG 55495 / CIP 109462 / JCM 13490 / 255-15).